Consider the following 201-residue polypeptide: UPF0637 protein LSEI_1198 (201 aa).

This sequence belongs to the UPF0637 family.

The sequence is that of UPF0637 protein LSEI_1198 from Lacticaseibacillus paracasei (strain ATCC 334 / BCRC 17002 / CCUG 31169 / CIP 107868 / KCTC 3260 / NRRL B-441) (Lactobacillus paracasei).